Consider the following 438-residue polypeptide: Probable glucose-6-phosphate isomerase (438 aa).

E280 acts as the Proton donor in catalysis. Active-site residues include H301 and K410.

It belongs to the GPI family.

It localises to the cytoplasm. It carries out the reaction alpha-D-glucose 6-phosphate = beta-D-fructose 6-phosphate. The protein operates within carbohydrate biosynthesis; gluconeogenesis. It functions in the pathway carbohydrate degradation; glycolysis; D-glyceraldehyde 3-phosphate and glycerone phosphate from D-glucose: step 2/4. In terms of biological role, catalyzes the reversible isomerization of glucose-6-phosphate to fructose-6-phosphate. This chain is Probable glucose-6-phosphate isomerase, found in Methanococcus maripaludis (strain DSM 14266 / JCM 13030 / NBRC 101832 / S2 / LL).